The chain runs to 50 residues: uncharacterized protein (50 aa).

The tract at residues 28-50 (SKLSPVTNGGKTIGKSNKVSKND) is disordered. Positions 29–50 (KLSPVTNGGKTIGKSNKVSKND) are enriched in polar residues.

This is an uncharacterized protein from Haemophilus influenzae (strain ATCC 51907 / DSM 11121 / KW20 / Rd).